Reading from the N-terminus, the 237-residue chain is Phosphoribosylaminoimidazole-succinocarboxamide synthase (237 aa).

Belongs to the SAICAR synthetase family.

The enzyme catalyses 5-amino-1-(5-phospho-D-ribosyl)imidazole-4-carboxylate + L-aspartate + ATP = (2S)-2-[5-amino-1-(5-phospho-beta-D-ribosyl)imidazole-4-carboxamido]succinate + ADP + phosphate + 2 H(+). The protein operates within purine metabolism; IMP biosynthesis via de novo pathway; 5-amino-1-(5-phospho-D-ribosyl)imidazole-4-carboxamide from 5-amino-1-(5-phospho-D-ribosyl)imidazole-4-carboxylate: step 1/2. The protein is Phosphoribosylaminoimidazole-succinocarboxamide synthase of Pseudomonas fluorescens (strain ATCC BAA-477 / NRRL B-23932 / Pf-5).